A 73-amino-acid chain; its full sequence is Toxin Td4 (73 aa).

Positions 1 to 7 are cleaved as a signal peptide; it reads IGMVVEC. Residues 8–70 form the LCN-type CS-alpha/beta domain; sequence KDGYLVGNDG…TWDRATNRCG (63 aa). Disulfide bonds link Cys-18-Cys-69, Cys-22-Cys-44, Cys-30-Cys-50, and Cys-34-Cys-52. Arg-71 carries the arginine amide modification.

It belongs to the long (4 C-C) scorpion toxin superfamily. Sodium channel inhibitor family. Beta subfamily. Expressed by the venom gland.

The protein localises to the secreted. Its function is as follows. Beta toxins bind voltage-independently at site-4 of sodium channels (Nav) and shift the voltage of activation toward more negative potentials thereby affecting sodium channel activation and promoting spontaneous and repetitive firing. In Tityus discrepans (Venezuelan scorpion), this protein is Toxin Td4.